Reading from the N-terminus, the 881-residue chain is Interference hedgehog (881 aa).

A signal peptide spans 1 to 26; that stretch reads MSSSSSSLLLMMLLLLLLLLTSKLEA. The Extracellular segment spans residues 27-693; that stretch reads IPVLSSTSPS…NHNETYSLNP (667 aa). Ig-like C2-type domains lie at 37 to 138, 128 to 228, 242 to 330, and 336 to 425; these read PGVR…IARL, PLVV…IPSS, PYLL…YINV, and PVIV…LQVN. Disulfide bonds link C60–C122, C167–C212, and C266–C314. Residues N75, N98, N194, N201, N282, N349, N381, N430, and N455 are each glycosylated (N-linked (GlcNAc...) asparagine). Cysteines 358 and 407 form a disulfide. Fibronectin type-III domains lie at 450–558 and 566–661; these read PPSA…LQRG and VPEL…TQRS. Heparin contacts are provided by R486, K492, and K494. A glycan (N-linked (GlcNAc...) asparagine) is linked at N517. R532 provides a ligand contact to heparin. Residue N548 is glycosylated (N-linked (GlcNAc...) asparagine). The segment at 655–685 is disordered; the sequence is QGRTQRSKLTTTEQPIQQKGGDRNVNTTPNH. Residues 656–671 are compositionally biased toward polar residues; it reads GRTQRSKLTTTEQPIQ. Residue N686 is glycosylated (N-linked (GlcNAc...) asparagine). A helical membrane pass occupies residues 694–714; sequence LLTGTIGGGALLLLLLIAFSF. Residues 715–881 are Cytoplasmic-facing; the sequence is CLCRRKNRNG…SSGSLNSVGV (167 aa). Disordered stretches follow at residues 768–791 and 809–881; these read NPLDQQQQQPLDEKNTNTNLNSPH and PTTY…SVGV. The segment covering 837–855 has biased composition (polar residues); sequence PGSNNNLQQIGSETTTTGQ. Low complexity predominate over residues 865–881; the sequence is SSRSENLSSGSLNSVGV.

The protein belongs to the immunoglobulin superfamily. IHOG family. As to quaternary structure, homodimer. Heterotetramer; 2 iHog chains bind 2 hh chains when facilitated by heparin, heparin is required to promote high-affinity interactions between hh and iHog.

It localises to the membrane. Its function is as follows. Mediates response to the active Hedgehog (Hh) protein signal in embryos, functioning upstream or at the level of patched (ptc). This is Interference hedgehog from Drosophila willistoni (Fruit fly).